A 302-amino-acid chain; its full sequence is Acetaldehyde dehydrogenase (302 aa).

12 to 15 (SGNI) serves as a coordination point for NAD(+). Cysteine 127 acts as the Acyl-thioester intermediate in catalysis. Residues 158 to 166 (SAGPGTRQN) and asparagine 276 contribute to the NAD(+) site.

This sequence belongs to the acetaldehyde dehydrogenase family.

The enzyme catalyses acetaldehyde + NAD(+) + CoA = acetyl-CoA + NADH + H(+). This Geobacillus genomosp. 3 protein is Acetaldehyde dehydrogenase (nahO).